The chain runs to 91 residues: MNKENVITLDNPVKRGEQVIEQVTLMKPSAGTLRGVSLAAVANSEVDALIKVLPRMTAPMLTEQEVAALELPDLVALAGKVVGFLSPNSVQ.

Belongs to the mulikevirus tail assembly protein family.

Its function is as follows. Promotes tail assembly by creating a scaffold for the tail tube proteins. Tail assembly proteins E and E' would wrap the linear tape measure protein to create a tail assembly scaffold. The protein is Tail assembly protein E of Escherichia phage P2 (Bacteriophage P2).